A 466-amino-acid polypeptide reads, in one-letter code: Soluble pyridine nucleotide transhydrogenase (466 aa).

36–45 (ERYQNVGGGC) provides a ligand contact to FAD.

This sequence belongs to the class-I pyridine nucleotide-disulfide oxidoreductase family. Requires FAD as cofactor.

The protein resides in the cytoplasm. The catalysed reaction is NAD(+) + NADPH = NADH + NADP(+). Functionally, conversion of NADPH, generated by peripheral catabolic pathways, to NADH, which can enter the respiratory chain for energy generation. The sequence is that of Soluble pyridine nucleotide transhydrogenase from Escherichia coli O9:H4 (strain HS).